The chain runs to 880 residues: Alanine--tRNA ligase (880 aa).

4 residues coordinate Zn(2+): His-567, His-571, Cys-669, and His-673.

The protein belongs to the class-II aminoacyl-tRNA synthetase family. Zn(2+) is required as a cofactor.

Its subcellular location is the cytoplasm. It carries out the reaction tRNA(Ala) + L-alanine + ATP = L-alanyl-tRNA(Ala) + AMP + diphosphate. Catalyzes the attachment of alanine to tRNA(Ala) in a two-step reaction: alanine is first activated by ATP to form Ala-AMP and then transferred to the acceptor end of tRNA(Ala). Also edits incorrectly charged Ser-tRNA(Ala) and Gly-tRNA(Ala) via its editing domain. This is Alanine--tRNA ligase from Bacillus thuringiensis subsp. konkukian (strain 97-27).